Here is a 44-residue protein sequence, read N- to C-terminus: Large ribosomal subunit protein bL34 (44 aa).

This sequence belongs to the bacterial ribosomal protein bL34 family.

This chain is Large ribosomal subunit protein bL34, found in Buchnera aphidicola subsp. Cinara cedri (strain Cc).